The primary structure comprises 390 residues: MGIHQLMQFLKEKAPNCFRTLMLDYFAGRTIGCDASMAMYQFLIQTQSAGQTQIIELTDKDGNRTGHLVGLFNRTLQFLENGIKPVWVFDGKPPLLKSGELARRKKLKEEAQVKTELALEQGDMQQALLQHQRTTTISSVMKEDAIKMLKLMGCPVIIAPCEAEAQCAELCRAGKIYATATEDMDALTFRTPVLLRGFNTKKEPIYEIIYDDMMKELEITYEQFVDLCILCGCDYTEKIEGIGPGTAYKLIKEFKSIEGILEHVQKVNAEREKNKQNPKYTVPTKFLYQDSRELFITPLVQKGEEIQLTWNKPDVENLKKFLVEEKGFAESRIDNGLKRIAKKDTTGFQSRLENFFGKTTKIIHPNNSKAKGKANKKNEQTQKSGGKKKI.

Residues 1–108 (MGIHQLMQFL…GELARRKKLK (108 aa)) are N-domain. D34 contributes to the Mg(2+) binding site. R74 serves as a coordination point for DNA. Residues D90, E162, E164, D183, and D185 each contribute to the Mg(2+) site. The I-domain stretch occupies residues 126–254 (QALLQHQRTT…GTAYKLIKEF (129 aa)). E162 lines the DNA pocket. Residues G232 and D234 each contribute to the DNA site. D234 lines the Mg(2+) pocket. Positions 348 to 356 (FQSRLENFF) are interaction with PCNA. Residues 359 to 390 (TTKIIHPNNSKAKGKANKKNEQTQKSGGKKKI) form a disordered region.

The protein belongs to the XPG/RAD2 endonuclease family. FEN1 subfamily. Interacts with PCNA. Three molecules of FEN1 bind to one PCNA trimer with each molecule binding to one PCNA monomer. PCNA stimulates the nuclease activity without altering cleavage specificity. It depends on Mg(2+) as a cofactor. Phosphorylated. Phosphorylation upon DNA damage induces relocalization to the nuclear plasma.

It localises to the nucleus. It is found in the nucleolus. The protein localises to the nucleoplasm. The protein resides in the mitochondrion. Its function is as follows. Structure-specific nuclease with 5'-flap endonuclease and 5'-3' exonuclease activities involved in DNA replication and repair. During DNA replication, cleaves the 5'-overhanging flap structure that is generated by displacement synthesis when DNA polymerase encounters the 5'-end of a downstream Okazaki fragment. It enters the flap from the 5'-end and then tracks to cleave the flap base, leaving a nick for ligation. Also involved in the long patch base excision repair (LP-BER) pathway, by cleaving within the apurinic/apyrimidinic (AP) site-terminated flap. Acts as a genome stabilization factor that prevents flaps from equilibrating into structures that lead to duplications and deletions. Also possesses 5'-3' exonuclease activity on nicked or gapped double-stranded DNA, and exhibits RNase H activity. Also involved in replication and repair of rDNA and in repairing mitochondrial DNA. This Paramecium tetraurelia protein is Flap endonuclease 1-1.